We begin with the raw amino-acid sequence, 306 residues long: Ribonuclease Z (306 aa).

Histidine 63, histidine 65, aspartate 67, histidine 68, histidine 141, aspartate 211, and histidine 269 together coordinate Zn(2+). Residue aspartate 67 is the Proton acceptor of the active site.

The protein belongs to the RNase Z family. Homodimer. Zn(2+) is required as a cofactor.

The catalysed reaction is Endonucleolytic cleavage of RNA, removing extra 3' nucleotides from tRNA precursor, generating 3' termini of tRNAs. A 3'-hydroxy group is left at the tRNA terminus and a 5'-phosphoryl group is left at the trailer molecule.. Functionally, zinc phosphodiesterase, which displays some tRNA 3'-processing endonuclease activity. Probably involved in tRNA maturation, by removing a 3'-trailer from precursor tRNA. In Staphylococcus saprophyticus subsp. saprophyticus (strain ATCC 15305 / DSM 20229 / NCIMB 8711 / NCTC 7292 / S-41), this protein is Ribonuclease Z.